A 267-amino-acid chain; its full sequence is Small ribosomal subunit protein eS4 (267 aa).

The region spanning 42–104 (LPLILVLRNR…TKENFRLLFD (63 aa)) is the S4 RNA-binding domain.

This sequence belongs to the eukaryotic ribosomal protein eS4 family.

It is found in the cytoplasm. This chain is Small ribosomal subunit protein eS4 (rps4), found in Dictyostelium discoideum (Social amoeba).